A 157-amino-acid chain; its full sequence is Myosin regulatory light chain, striated adductor muscle (157 aa).

EF-hand domains are found at residues 16-51 (KQIQEMKEAFSMIDVDRDGFVSKEDIKAISEQLGRA) and 85-120 (DSEETIRNAFAMFDEQETKKLNIEYIKDLLENMGDN). Residues aspartate 29, aspartate 31, aspartate 33, and aspartate 40 each contribute to the Ca(2+) site.

Its function is as follows. In molluscan muscle, calcium regulation is associated with myosin rather than with actin. Muscle myosin contains two types of light chains: the catalytic light chain, essential for ATPase activity, and the regulatory light chain, a calcium-binding protein responsible for Ca(2+) dependent binding and Ca(2+) dependent Mg-ATPase activity. The chain is Myosin regulatory light chain, striated adductor muscle from Argopecten irradians (Bay scallop).